Consider the following 448-residue polypeptide: Cytoplasmic tRNA 2-thiolation protein 2 (448 aa).

This sequence belongs to the CTU2/NCS2 family.

It is found in the cytoplasm. It functions in the pathway tRNA modification; 5-methoxycarbonylmethyl-2-thiouridine-tRNA biosynthesis. In terms of biological role, plays a central role in 2-thiolation of mcm(5)S(2)U at tRNA wobble positions of tRNA(Lys), tRNA(Glu) and tRNA(Gln). May act by forming a heterodimer with NCS6 that ligates sulfur from thiocarboxylated URM1 onto the uridine of tRNAs at wobble position. Prior mcm(5) tRNA modification by the elongator complex is required for 2-thiolation. May also be involved in protein urmylation. This Lodderomyces elongisporus (strain ATCC 11503 / CBS 2605 / JCM 1781 / NBRC 1676 / NRRL YB-4239) (Yeast) protein is Cytoplasmic tRNA 2-thiolation protein 2.